Consider the following 389-residue polypeptide: Probable peptide chain release factor 1, mitochondrial (389 aa).

Gln-259 carries the post-translational modification N5-methylglutamine.

This sequence belongs to the prokaryotic/mitochondrial release factor family. In terms of processing, methylation of glutamine in the GGQ triplet is conserved from bacteria to mammals.

It localises to the mitochondrion. Functionally, mitochondrial peptide chain release factor that directs the termination of translation in response to the peptide chain termination codons UAA and UAG. The polypeptide is Probable peptide chain release factor 1, mitochondrial (Caenorhabditis elegans).